Reading from the N-terminus, the 155-residue chain is Cytochrome c-type biogenesis protein CcmE (155 aa).

Residues 1–8 lie on the Cytoplasmic side of the membrane; it reads MNPRRKKR. A helical; Signal-anchor for type II membrane protein transmembrane segment spans residues 9 to 29; that stretch reads LLITSLLAVALSLAVGLVLFA. Topologically, residues 30–155 are periplasmic; sequence LQQNIDLFYT…GMDNFKANNK (126 aa). 2 residues coordinate heme: histidine 131 and tyrosine 135.

Belongs to the CcmE/CycJ family.

The protein resides in the cell inner membrane. In terms of biological role, heme chaperone required for the biogenesis of c-type cytochromes. Transiently binds heme delivered by CcmC and transfers the heme to apo-cytochromes in a process facilitated by CcmF and CcmH. The protein is Cytochrome c-type biogenesis protein CcmE of Psychromonas ingrahamii (strain DSM 17664 / CCUG 51855 / 37).